Reading from the N-terminus, the 86-residue chain is MSGIKFYLVKGTALFGESHYPEKRKFVKIVRALNEKQAIEYVYSHFGSKNKIKRYNIKIEQISEIKEEEIPDRRIRELAKVDKIIM.

This sequence belongs to the eukaryotic ribosomal protein eL20 family. In terms of assembly, part of the 50S ribosomal subunit. Binds 23S rRNA.

The protein is Large ribosomal subunit protein eL20 of Saccharolobus solfataricus (strain ATCC 35092 / DSM 1617 / JCM 11322 / P2) (Sulfolobus solfataricus).